The primary structure comprises 692 residues: Elongation factor G (692 aa).

Residues 8–282 (AKTRNIGIMA…AVIDYLPSPL (275 aa)) enclose the tr-type G domain. GTP is bound by residues 17 to 24 (AHVDAGKT), 81 to 85 (DTPGH), and 135 to 138 (NKMD).

Belongs to the TRAFAC class translation factor GTPase superfamily. Classic translation factor GTPase family. EF-G/EF-2 subfamily.

It localises to the cytoplasm. Catalyzes the GTP-dependent ribosomal translocation step during translation elongation. During this step, the ribosome changes from the pre-translocational (PRE) to the post-translocational (POST) state as the newly formed A-site-bound peptidyl-tRNA and P-site-bound deacylated tRNA move to the P and E sites, respectively. Catalyzes the coordinated movement of the two tRNA molecules, the mRNA and conformational changes in the ribosome. This Streptococcus uberis (strain ATCC BAA-854 / 0140J) protein is Elongation factor G.